The sequence spans 185 residues: Ribosome-recycling factor (185 aa).

The disordered stretch occupies residues 163-185 (LTNEATKKIDAISKDKEKEITEG). A compositionally biased stretch (basic and acidic residues) spans 167 to 185 (ATKKIDAISKDKEKEITEG).

Belongs to the RRF family.

It localises to the cytoplasm. Responsible for the release of ribosomes from messenger RNA at the termination of protein biosynthesis. May increase the efficiency of translation by recycling ribosomes from one round of translation to another. This chain is Ribosome-recycling factor, found in Latilactobacillus sakei subsp. sakei (strain 23K) (Lactobacillus sakei subsp. sakei).